The primary structure comprises 90 residues: UPF0297 protein Swol_0469 (90 aa).

This sequence belongs to the UPF0297 family.

The sequence is that of UPF0297 protein Swol_0469 from Syntrophomonas wolfei subsp. wolfei (strain DSM 2245B / Goettingen).